The primary structure comprises 275 residues: 2,3,4,5-tetrahydropyridine-2,6-dicarboxylate N-succinyltransferase (275 aa).

Belongs to the transferase hexapeptide repeat family.

The protein resides in the cytoplasm. The catalysed reaction is (S)-2,3,4,5-tetrahydrodipicolinate + succinyl-CoA + H2O = (S)-2-succinylamino-6-oxoheptanedioate + CoA. It functions in the pathway amino-acid biosynthesis; L-lysine biosynthesis via DAP pathway; LL-2,6-diaminopimelate from (S)-tetrahydrodipicolinate (succinylase route): step 1/3. This Burkholderia ambifaria (strain MC40-6) protein is 2,3,4,5-tetrahydropyridine-2,6-dicarboxylate N-succinyltransferase.